Consider the following 200-residue polypeptide: ATP-dependent Clp protease proteolytic subunit (200 aa).

Serine 96 serves as the catalytic Nucleophile. The active site involves histidine 121.

The protein belongs to the peptidase S14 family. Fourteen ClpP subunits assemble into 2 heptameric rings which stack back to back to give a disk-like structure with a central cavity, resembling the structure of eukaryotic proteasomes.

The protein resides in the cytoplasm. The enzyme catalyses Hydrolysis of proteins to small peptides in the presence of ATP and magnesium. alpha-casein is the usual test substrate. In the absence of ATP, only oligopeptides shorter than five residues are hydrolyzed (such as succinyl-Leu-Tyr-|-NHMec, and Leu-Tyr-Leu-|-Tyr-Trp, in which cleavage of the -Tyr-|-Leu- and -Tyr-|-Trp bonds also occurs).. Functionally, cleaves peptides in various proteins in a process that requires ATP hydrolysis. Has a chymotrypsin-like activity. Plays a major role in the degradation of misfolded proteins. This is ATP-dependent Clp protease proteolytic subunit from Leuconostoc citreum (strain KM20).